Consider the following 347-residue polypeptide: Very-long-chain 3-oxoacyl-CoA reductase (347 aa).

Residues 20-40 traverse the membrane as a helical segment; it reads LLWVVFGLGVLKCTTLSLRFL. Asp-120, Asn-147, Tyr-223, Lys-227, Val-256, and Ser-258 together coordinate NADP(+). The Proton donor role is filled by Tyr-223. Catalysis depends on Lys-227, which acts as the Lowers pKa of active site Tyr.

The protein belongs to the short-chain dehydrogenases/reductases (SDR) family. Interacts with the fatty acid elongation system components ELO3 and TSC13.

The protein resides in the endoplasmic reticulum membrane. It carries out the reaction a very-long-chain (3R)-3-hydroxyacyl-CoA + NADP(+) = a very-long-chain 3-oxoacyl-CoA + NADPH + H(+). It catalyses the reaction 3-oxooctadecanoyl-CoA + NADPH + H(+) = (3R)-hydroxyoctadecanoyl-CoA + NADP(+). The enzyme catalyses 3-oxoeicosanoyl-CoA + NADPH + H(+) = (3R)-hydroxyeicosanoyl-CoA + NADP(+). The catalysed reaction is 3-oxodocosanoyl-CoA + NADPH + H(+) = (3R)-hydroxydocosanoyl-CoA + NADP(+). It carries out the reaction 3-oxotetracosanoyl-CoA + NADPH + H(+) = (3R)-hydroxytetracosanoyl-CoA + NADP(+). It catalyses the reaction 3-oxohexacosanoyl-CoA + NADPH + H(+) = (3R)-hydroxyhexacosanoyl-CoA + NADP(+). It functions in the pathway lipid metabolism; fatty acid biosynthesis. Its function is as follows. Component of the microsomal membrane bound fatty acid elongation system, which produces the 26-carbon very long-chain fatty acids (VLCFA) from palmitate. Catalyzes the reduction of the 3-ketoacyl-CoA intermediate that is formed in each cycle of fatty acid elongation. VLCFAs serve as precursors for ceramide and sphingolipids. This Saccharomyces cerevisiae (strain ATCC 204508 / S288c) (Baker's yeast) protein is Very-long-chain 3-oxoacyl-CoA reductase (IFA38).